Reading from the N-terminus, the 400-residue chain is Acetate kinase (400 aa).

Asn10 provides a ligand contact to Mg(2+). ATP is bound at residue Lys17. Position 91 (Arg91) interacts with substrate. The active-site Proton donor/acceptor is Asp150. ATP is bound by residues 210–214 (HLGNG), 285–287 (DCR), and 333–337 (GIGEN). Glu387 is a binding site for Mg(2+).

Belongs to the acetokinase family. As to quaternary structure, homodimer. Mg(2+) serves as cofactor. Requires Mn(2+) as cofactor.

The protein localises to the cytoplasm. It carries out the reaction acetate + ATP = acetyl phosphate + ADP. The protein operates within metabolic intermediate biosynthesis; acetyl-CoA biosynthesis; acetyl-CoA from acetate: step 1/2. In terms of biological role, catalyzes the formation of acetyl phosphate from acetate and ATP. Can also catalyze the reverse reaction. In Cronobacter sakazakii (strain ATCC BAA-894) (Enterobacter sakazakii), this protein is Acetate kinase.